We begin with the raw amino-acid sequence, 594 residues long: Putative lipase ATG15-1 (594 aa).

The Cytoplasmic portion of the chain corresponds to 1 to 12 (MRRRPLCTSASR). A helical; Signal-anchor for type II membrane protein membrane pass occupies residues 13–33 (VTASLLLSFLAVSSAAELPIL). Residues 34 to 594 (PAPPISPQPH…ANHFVYVLHA (561 aa)) are Lumenal-facing. N-linked (GlcNAc...) asparagine glycosylation is found at asparagine 144, asparagine 179, asparagine 201, asparagine 259, and asparagine 283. Serine 299 acts as the Charge relay system in catalysis. Asparagine 432 and asparagine 445 each carry an N-linked (GlcNAc...) asparagine glycan. Over residues 447–469 (TETTTTSTSKPTSTSKSSKSNTR) the composition is skewed to low complexity. Disordered stretches follow at residues 447–473 (TETT…TRTE) and 489–509 (TGTQ…TSTC). Residues asparagine 576 and asparagine 582 are each glycosylated (N-linked (GlcNAc...) asparagine).

It belongs to the AB hydrolase superfamily. Lipase family. In terms of assembly, binds to both phosphatidylinositol (PI) and phosphatidylinositol 3,5-bisphosphate (PIP2).

The protein localises to the endosome. It localises to the multivesicular body membrane. The protein resides in the prevacuolar compartment membrane. The catalysed reaction is a triacylglycerol + H2O = a diacylglycerol + a fatty acid + H(+). In terms of biological role, lipase which is essential for lysis of subvacuolar cytoplasm to vacuole targeted bodies and intravacuolar autophagic bodies. Involved in the lysis of intravacuolar multivesicular body (MVB) vesicles. The intravacuolar membrane disintegration by ATG15 is critical to life span extension. This is Putative lipase ATG15-1 (ATG15-1) from Phaeosphaeria nodorum (strain SN15 / ATCC MYA-4574 / FGSC 10173) (Glume blotch fungus).